Consider the following 444-residue polypeptide: Exodeoxyribonuclease 7 large subunit (444 aa).

It belongs to the XseA family. As to quaternary structure, heterooligomer composed of large and small subunits.

The protein localises to the cytoplasm. It carries out the reaction Exonucleolytic cleavage in either 5'- to 3'- or 3'- to 5'-direction to yield nucleoside 5'-phosphates.. Bidirectionally degrades single-stranded DNA into large acid-insoluble oligonucleotides, which are then degraded further into small acid-soluble oligonucleotides. The polypeptide is Exodeoxyribonuclease 7 large subunit (Rickettsia akari (strain Hartford)).